Reading from the N-terminus, the 173-residue chain is Lens fiber membrane intrinsic protein (173 aa).

The Cytoplasmic segment spans residues 1–3 (MYS). The helical transmembrane segment at 4 to 24 (FMGGGLFCAWVGTILLVVAMA) threads the bilayer. The Extracellular segment spans residues 25 to 66 (TDHWMQYRLSGSFAHQGLWRYCLGNKCYLQTDSIAYWNATRA). Residues tryptophan 43 and tryptophan 61 are each glycosylated (C-linked (Man) tryptophan). A glycan (N-linked (GlcNAc...) asparagine) is linked at asparagine 62. A helical transmembrane segment spans residues 67 to 87 (FMILSALCAISGIIMGIMAFA). Residues 88 to 98 (HQPTFSRISRP) lie on the Cytoplasmic side of the membrane. The helical transmembrane segment at 99–119 (FSAGIMFFSSTLFVVLALAIY) threads the bilayer. Topologically, residues 120–140 (TGVTVSFLGRRFGDWRFSWSY) are extracellular. A helical membrane pass occupies residues 141–161 (ILGWVAVLMTFFAGIFYMCAY). The Cytoplasmic segment spans residues 162-173 (RVHECRRLSTPR). Residue serine 170 is modified to Phosphoserine. Position 171 is a phosphothreonine (threonine 171).

The protein belongs to the PMP-22/EMP/MP20 family. As to quaternary structure, seems to be associated with itself or another lens membrane component via disulfide bonds. Eye lens specific.

Its subcellular location is the membrane. Present in the thicker 16-17 nm junctions of mammalian lens fiber cells, where it may contribute to cell junctional organization. Acts as a receptor for calmodulin. May play an important role in both lens development and cataractogenesis. This is Lens fiber membrane intrinsic protein (LIM2) from Homo sapiens (Human).